The following is a 340-amino-acid chain: Ferrochelatase (340 aa).

Fe cation is bound by residues histidine 189 and glutamate 292.

The protein belongs to the ferrochelatase family.

It localises to the cytoplasm. The enzyme catalyses heme b + 2 H(+) = protoporphyrin IX + Fe(2+). The protein operates within porphyrin-containing compound metabolism; protoheme biosynthesis; protoheme from protoporphyrin-IX: step 1/1. Its function is as follows. Catalyzes the ferrous insertion into protoporphyrin IX. The polypeptide is Ferrochelatase (Pseudomonas savastanoi pv. phaseolicola (strain 1448A / Race 6) (Pseudomonas syringae pv. phaseolicola (strain 1448A / Race 6))).